The following is a 131-amino-acid chain: Peptide methionine sulfoxide reductase MsrB (131 aa).

Residues 8-130 (LDEWRSMLDP…NSVCIDLRPR (123 aa)) form the MsrB domain. Zn(2+) contacts are provided by C47, C50, C96, and C99. The active-site Nucleophile is C119.

The protein belongs to the MsrB Met sulfoxide reductase family. Zn(2+) is required as a cofactor.

It catalyses the reaction L-methionyl-[protein] + [thioredoxin]-disulfide + H2O = L-methionyl-(R)-S-oxide-[protein] + [thioredoxin]-dithiol. In Pseudomonas putida (strain ATCC 47054 / DSM 6125 / CFBP 8728 / NCIMB 11950 / KT2440), this protein is Peptide methionine sulfoxide reductase MsrB.